Reading from the N-terminus, the 902-residue chain is Nuclear factor of activated T-cells, cytoplasmic 4 (902 aa).

2 disordered regions span residues 16 to 180 (VFGE…SSWS) and 208 to 369 (RFGL…GGSR). Residues 50–81 (EPPPYGAAPIGIPRPPPPRPGMHSPPPRPAPS) are compositionally biased toward pro residues. A compositionally biased stretch (gly residues) spans 96–109 (GGPGGGAGGAGGGR). Residues 114 to 119 (PSIRIT) are calcineurin-binding. The span at 151–165 (GFGGYREAGGQGGGA) shows a compositional bias: gly residues. The span at 166–180 (FFSPSPGSSSLSSWS) shows a compositional bias: low complexity. Phosphoserine; by MAPK7 and MAPK14 is present on residues S168 and S170. Residues S213 and S217 each carry the phosphoserine; by MAPK8 and MAPK9 modification. An SP 1 repeat occupies 213–229 (SPLPSPRASPRPWTPED). The segment at 213 to 293 (SPLPSPRASP…LSRRGSLGEE (81 aa)) is 2 approximate SP repeats. Pro residues-rich tracts occupy residues 215–227 (LPSPRASPRPWTP) and 254–263 (GPTPASPRPA). The Nuclear localization signal motif lies at 268-270 (KRR). Over residues 272-288 (SSSGTPSSASPALSRRG) the composition is skewed to low complexity. The stretch at 277-293 (PSSASPALSRRGSLGEE) is one SP 2; approximate repeat. S289 and S344 each carry phosphoserine; by RPS6KA3. Positions 401–582 (SALPPLDWPL…VPIECSQRSA (182 aa)) constitute an RHD domain. A DNA-binding region spans residues 430-437 (RAHYETEG). One can recognise an IPT/TIG domain in the interval 586-683 (PQVEAYSPSA…KRSPTQSFRF (98 aa)). The short motif at 672–674 (RRK) is the Nuclear localization signal element. K689 is covalently cross-linked (Glycyl lysine isopeptide (Lys-Gly) (interchain with G-Cter in SUMO2)). The segment at 791 to 870 (PYGGRGSSFS…GGYSSGFRDS (80 aa)) is disordered. Pro residues predominate over residues 805-824 (FSPPAPFRPPPLPASPPLEG).

In terms of assembly, member of the multicomponent NFATC transcription complex that consists of at least two components, a pre-existing cytoplasmic component NFATC2 and an inducible nuclear component NFATC1. Other NFAT proteins, such as NFATC3, or members of the activating protein-1 (AP-1) family and MAF can also bind the complex. NFAT proteins can bind DNA as monomers or dimers. Component of a promoter-binding complex composed of STAT3, NFATC3 and NFATC4; complex formation is enhanced by calcineurin. Interacts with CREBBP; this interaction potentiates transcription activation. Interacts with MAPK8/JNK1 and MAPK9/JNK2. Interacts with GATA4 (via the second Zn finger). Interacts (via N-terminus) with IRAK1 (via C-terminus). Interacts with RPS6KA3. Interacts with HOMER1, HOMER2 and HOMER3; this interaction competes with calcineurin/PPP3CA-binding and hence prevents NFATC4 dephosphorylation and activation. Interacts with ESR1 and ESR2; this interaction decreases NFATC4 transcriptional activity. Interacts with MTOR and MAPK7/ERK5. Interacts with TRIM17; this interaction prevents NFATC3 nuclear localization. Interacts with TCF25 (via C-terminus); the interaction leads to suppression of NFATC4 transcription factor activity and is reduced following stimulation with angiotensin-2. Phosphorylated by NFATC-kinases; dephosphorylated by calcineurin/PPP3CA. Phosphorylated on Ser-168 and Ser-170 by MTOR, IRAK1, MAPK7/ERK5 and MAPK14/p38, on Ser-213 and Ser-217 by MAPK8/JNK1 and MAPK9/JNK2, and on Ser-289 and Ser-344 by RPS6KA3. Phosphorylated by GSK3B. Phosphorylation by GSK3B markedly increases NFATC4 ubiquitination. Phosphorylation at Ser-168 and Ser-170 is stimulated by UV irradiation. Phosphorylation determines subcellular location: the hyperphosphorylated protein is cytosolic, while the dephosphorylated form is targeted to the nucleus. In terms of processing, ubiquitinated, leading to degradation by the proteasome. Ubiquitination may be stimulated by GSK3B-dependent phosphorylation. Polyubiquitin linkage mainly occurs through 'Lys-48'. As to expression, widely expressed, with high levels in placenta, lung, kidney, testis and ovary. Weakly expressed in spleen and thymus. In the hippocampus, expressed in the granular layer of the dentate gyrus, in the pyramidal neurons of CA3 region, and in the hippocampal fissure. Expressed in the heart (at protein level).

It is found in the cytoplasm. The protein localises to the nucleus. With respect to regulation, transcriptional activity may be repressed by ESR1 and ESR2. Its function is as follows. Ca(2+)-regulated transcription factor that is involved in several processes, including the development and function of the immune, cardiovascular, musculoskeletal, and nervous systems. Involved in T-cell activation, stimulating the transcription of cytokine genes, including that of IL2 and IL4. Along with NFATC3, involved in embryonic heart development. Following JAK/STAT signaling activation and as part of a complex with NFATC3 and STAT3, binds to the alpha-beta E4 promoter region of CRYAB and activates transcription in cardiomyocytes. Involved in mitochondrial energy metabolism required for cardiac morphogenesis and function. Transactivates many genes involved in the cardiovascular system, including AGTR2, NPPB/BNP (in synergy with GATA4), NPPA/ANP/ANF and MYH7/beta-MHC. Involved in the regulation of adult hippocampal neurogenesis. Involved in BDNF-driven pro-survival signaling in hippocampal adult-born neurons. Involved in the formation of long-term spatial memory and long-term potentiation. In cochlear nucleus neurons, may play a role in deafferentation-induced apoptosis during the developmental critical period, when auditory neurons depend on afferent input for survival. Binds to and activates the BACE1/Beta-secretase 1 promoter, hence may regulate the proteolytic processing of the amyloid precursor protein (APP). Plays a role in adipocyte differentiation. May be involved in myoblast differentiation into myotubes. Binds the consensus DNA sequence 5'-GGAAAAT-3'. In the presence of CREBBP, activates TNF transcription. Binds to PPARG gene promoter and regulates its activity. Binds to PPARG and REG3G gene promoters. The sequence is that of Nuclear factor of activated T-cells, cytoplasmic 4 (NFATC4) from Homo sapiens (Human).